The primary structure comprises 97 residues: Aspartyl/glutamyl-tRNA(Asn/Gln) amidotransferase subunit C (97 aa).

The protein belongs to the GatC family. In terms of assembly, heterotrimer of A, B and C subunits.

The enzyme catalyses L-glutamyl-tRNA(Gln) + L-glutamine + ATP + H2O = L-glutaminyl-tRNA(Gln) + L-glutamate + ADP + phosphate + H(+). It carries out the reaction L-aspartyl-tRNA(Asn) + L-glutamine + ATP + H2O = L-asparaginyl-tRNA(Asn) + L-glutamate + ADP + phosphate + 2 H(+). Allows the formation of correctly charged Asn-tRNA(Asn) or Gln-tRNA(Gln) through the transamidation of misacylated Asp-tRNA(Asn) or Glu-tRNA(Gln) in organisms which lack either or both of asparaginyl-tRNA or glutaminyl-tRNA synthetases. The reaction takes place in the presence of glutamine and ATP through an activated phospho-Asp-tRNA(Asn) or phospho-Glu-tRNA(Gln). The chain is Aspartyl/glutamyl-tRNA(Asn/Gln) amidotransferase subunit C from Listeria welshimeri serovar 6b (strain ATCC 35897 / DSM 20650 / CCUG 15529 / CIP 8149 / NCTC 11857 / SLCC 5334 / V8).